Reading from the N-terminus, the 177-residue chain is Coatomer subunit zeta-3 (177 aa).

This sequence belongs to the adaptor complexes small subunit family. In terms of assembly, oligomeric complex that consists of at least the alpha, beta, beta', gamma, delta, epsilon and zeta subunits.

It localises to the cytoplasm. Its subcellular location is the golgi apparatus membrane. It is found in the cytoplasmic vesicle. The protein localises to the COPI-coated vesicle membrane. Its function is as follows. The coatomer is a cytosolic protein complex that binds to dilysine motifs and reversibly associates with Golgi non-clathrin-coated vesicles, which further mediate biosynthetic protein transport from the ER, via the Golgi up to the trans Golgi network. Coatomer complex is required for budding from Golgi membranes, and is essential for the retrograde Golgi-to-ER transport of dilysine-tagged proteins. The zeta subunit may be involved in regulating the coat assembly and, hence, the rate of biosynthetic protein transport due to its association-dissociation properties with the coatomer complex. This Oryza sativa subsp. japonica (Rice) protein is Coatomer subunit zeta-3.